Consider the following 361-residue polypeptide: Alanine racemase (361 aa).

Lys34 serves as the catalytic Proton acceptor; specific for D-alanine. Residue Lys34 is modified to N6-(pyridoxal phosphate)lysine. Residue Arg129 coordinates substrate. Tyr254 acts as the Proton acceptor; specific for L-alanine in catalysis. Met302 is a binding site for substrate.

This sequence belongs to the alanine racemase family. It depends on pyridoxal 5'-phosphate as a cofactor.

The enzyme catalyses L-alanine = D-alanine. It catalyses the reaction L-serine = D-serine. The protein operates within amino-acid biosynthesis; D-alanine biosynthesis; D-alanine from L-alanine: step 1/1. Catalyzes the interconversion of L-alanine and D-alanine. Likely plays an important role in supplying D-alanine, which is an indispensable constituent in the biosynthesis of bacterial cell-wall peptidoglycan. To a lesser extent, is also able to racemize L-serine and D-serine. Does not act on other proteinogenic amino-acids. This is Alanine racemase (alr1) from Vibrio cholerae serotype O1 (strain ATCC 39315 / El Tor Inaba N16961).